We begin with the raw amino-acid sequence, 254 residues long: Phosphoglycerate mutase 1 (254 aa).

Residues Arg10–Asn17 and Ser23–Gly24 contribute to the substrate site. His11 acts as the Tele-phosphohistidine intermediate in catalysis. Residues Ser14 and Ser23 each carry the phosphoserine modification. Tyr26 carries the phosphotyrosine modification. The residue at position 31 (Ser31) is a Phosphoserine. Substrate is bound by residues Arg62, Glu89 to Tyr92, and Lys100. Residue Glu89 is the Proton donor/acceptor of the active site. Lys106 is subject to N6-acetyllysine. Residue Arg116 to Arg117 participates in substrate binding. Position 118 is a phosphoserine (Ser118). Gly187–Asn188 lines the substrate pocket. Lys251 bears the N6-acetyllysine; alternate mark. Position 251 is an N6-succinyllysine; alternate (Lys251). 2 positions are modified to N6-acetyllysine: Lys253 and Lys254.

It belongs to the phosphoglycerate mutase family. BPG-dependent PGAM subfamily. In terms of assembly, homodimer. In terms of processing, acetylated at Lys-253, Lys-253 and Lys-254 under high glucose condition. Acetylation increases catalytic activity. Under glucose restriction SIRT1 levels dramatically increase and it deacetylates the enzyme.

The enzyme catalyses (2R)-2-phosphoglycerate = (2R)-3-phosphoglycerate. It catalyses the reaction (2R)-3-phospho-glyceroyl phosphate = (2R)-2,3-bisphosphoglycerate + H(+). In terms of biological role, catalyzes the interconversion of 2-phosphoglycerate and 3-phosphoglyceratea crucial step in glycolysis, by using 2,3-bisphosphoglycerate. Also catalyzes the interconversion of (2R)-2,3-bisphosphoglycerate and (2R)-3-phospho-glyceroyl phosphate. The polypeptide is Phosphoglycerate mutase 1 (Bos taurus (Bovine)).